Consider the following 82-residue polypeptide: Small ribosomal subunit protein bS18 (82 aa).

The segment at 1-20 (MSEINQTVTRRPFHRRRKTC) is disordered.

It belongs to the bacterial ribosomal protein bS18 family. In terms of assembly, part of the 30S ribosomal subunit. Forms a tight heterodimer with protein bS6.

In terms of biological role, binds as a heterodimer with protein bS6 to the central domain of the 16S rRNA, where it helps stabilize the platform of the 30S subunit. The sequence is that of Small ribosomal subunit protein bS18 from Bartonella quintana (strain Toulouse) (Rochalimaea quintana).